The sequence spans 485 residues: NADH-quinone oxidoreductase subunit N (485 aa).

A run of 14 helical transmembrane segments spans residues 8 to 28, 35 to 55, 75 to 95, 105 to 125, 127 to 147, 159 to 179, 203 to 223, 235 to 255, 271 to 291, 297 to 317, 326 to 346, 374 to 394, 408 to 430, and 455 to 475; these read LIALLPLLIVGLTVVVVMLSI, FLNATLSVLGLNAALVSLWFV, LYTGLVLLASLATCTFAYPWL, FYLLVLIAALGGILLAGANHL, ALFLGIELISLPLFGLVGYAF, YTILSAAASSFLLFGMALVYA, LLAGLGLMIVGLGFKLSLVPF, PAPVSTFLATASKIAIFGVVM, VVLGLIAFASIIFGNLMALSQ, LLGYSSISHLGYLLVALIALQ, VGVYLAGYLFSSLGAFGVVSL, AVMTVMMLSLAGIPMTLGFIG, WWLVAAVVVGSAIGLYYYLRVAV, and IVVLISALLVLVLGIWPQPLI.

This sequence belongs to the complex I subunit 2 family. NDH-1 is composed of 13 different subunits. Subunits NuoA, H, J, K, L, M, N constitute the membrane sector of the complex.

The protein resides in the cell inner membrane. The catalysed reaction is a quinone + NADH + 5 H(+)(in) = a quinol + NAD(+) + 4 H(+)(out). NDH-1 shuttles electrons from NADH, via FMN and iron-sulfur (Fe-S) centers, to quinones in the respiratory chain. The immediate electron acceptor for the enzyme in this species is believed to be ubiquinone. Couples the redox reaction to proton translocation (for every two electrons transferred, four hydrogen ions are translocated across the cytoplasmic membrane), and thus conserves the redox energy in a proton gradient. The protein is NADH-quinone oxidoreductase subunit N of Klebsiella pneumoniae subsp. pneumoniae (strain ATCC 700721 / MGH 78578).